A 394-amino-acid chain; its full sequence is Xylose isomerase (394 aa).

Residues histidine 54 and aspartate 57 contribute to the active site. Residues glutamate 180, glutamate 216, histidine 219, aspartate 244, aspartate 254, aspartate 256, and aspartate 285 each coordinate Mg(2+). A disordered region spans residues 370-394; that stretch reads VRTPRPAGDGPPAGRARLTVAPRKR. The span at 373-386 shows a compositional bias: low complexity; the sequence is PRPAGDGPPAGRAR.

It belongs to the xylose isomerase family. As to quaternary structure, homotetramer. Mg(2+) is required as a cofactor.

Its subcellular location is the cytoplasm. The catalysed reaction is alpha-D-xylose = alpha-D-xylulofuranose. Its function is as follows. Involved in D-xylose catabolism. The sequence is that of Xylose isomerase (xylA) from Streptomyces rochei (Streptomyces parvullus).